The sequence spans 305 residues: Olfactory receptor 4F17 (305 aa).

At 1–18 (MVTEFIFLGLSDSQGLQT) the chain is on the extracellular side. The helical transmembrane segment at 19–42 (FLFMLFFVFYGGIVFGNLLIVITV) threads the bilayer. The Cytoplasmic portion of the chain corresponds to 43–50 (VSDSHLHS). The chain crosses the membrane as a helical span at residues 51-72 (PMYFLLANLSLIDLSLSSVTAP). Topologically, residues 73–93 (KMITDFFSQRKVISFKGCLVQ) are extracellular. C90 and C182 are oxidised to a cystine. A helical membrane pass occupies residues 94–113 (IFLLHFFGGSEMVILIAMGF). Topologically, residues 114–132 (DRYIAICKPLHYTTIMCGN) are cytoplasmic. A helical membrane pass occupies residues 133-151 (ACVGIMAVAWGIGFLHSVS). At 152–188 (QLAFAVHLPFCGPNEVDSFYCDLPRVIKLACTDTYRL) the chain is on the extracellular side. A helical membrane pass occupies residues 189-212 (DIMVIANSGVLTVCSFVLLIISYT). The Cytoplasmic portion of the chain corresponds to 213-228 (IILMTIQHRPLDKSSK). The chain crosses the membrane as a helical span at residues 229–251 (ALSTLTAHITVVLLFFGPCVFIY). At 252–262 (AWPFPIKSLDK) the chain is on the extracellular side. A helical transmembrane segment spans residues 263-282 (FLAVFYSVITPLLNPIIYTL). Topologically, residues 283-305 (RNKDMKTAIRQLRKWDAHSSVKF) are cytoplasmic.

This sequence belongs to the G-protein coupled receptor 1 family.

The protein resides in the cell membrane. Functionally, odorant receptor. The chain is Olfactory receptor 4F17 (OR4F17) from Homo sapiens (Human).